We begin with the raw amino-acid sequence, 330 residues long: Probable xanthine dehydrogenase subunit A (330 aa).

Could be composed of four subunits: PucA, PucC, PucD and PucE.

It catalyses the reaction xanthine + NAD(+) + H2O = urate + NADH + H(+). It carries out the reaction hypoxanthine + NAD(+) + H2O = xanthine + NADH + H(+). It participates in purine metabolism; hypoxanthine degradation; urate from hypoxanthine: step 1/2. It functions in the pathway purine metabolism; hypoxanthine degradation; urate from hypoxanthine: step 2/2. Its function is as follows. Oxidizes hypoxanthine and xanthine to uric acid. PucA subunit could exert a molybdenum cofactor recruiting function. This is Probable xanthine dehydrogenase subunit A (pucA) from Bacillus subtilis (strain 168).